Reading from the N-terminus, the 631-residue chain is 1-deoxy-D-xylulose-5-phosphate synthase (631 aa).

Residues H73, 113–115 (SHA), N174, Y285, and E367 each bind thiamine diphosphate. N174 is a Mg(2+) binding site.

It belongs to the transketolase family. DXPS subfamily. Homodimer. Mg(2+) is required as a cofactor. The cofactor is thiamine diphosphate.

The enzyme catalyses D-glyceraldehyde 3-phosphate + pyruvate + H(+) = 1-deoxy-D-xylulose 5-phosphate + CO2. It functions in the pathway metabolic intermediate biosynthesis; 1-deoxy-D-xylulose 5-phosphate biosynthesis; 1-deoxy-D-xylulose 5-phosphate from D-glyceraldehyde 3-phosphate and pyruvate: step 1/1. Catalyzes the acyloin condensation reaction between C atoms 2 and 3 of pyruvate and glyceraldehyde 3-phosphate to yield 1-deoxy-D-xylulose-5-phosphate (DXP). The protein is 1-deoxy-D-xylulose-5-phosphate synthase of Streptomyces sp. (strain CL190).